Reading from the N-terminus, the 234-residue chain is Phosphoribosylaminoimidazole-succinocarboxamide synthase (234 aa).

This sequence belongs to the SAICAR synthetase family.

The catalysed reaction is 5-amino-1-(5-phospho-D-ribosyl)imidazole-4-carboxylate + L-aspartate + ATP = (2S)-2-[5-amino-1-(5-phospho-beta-D-ribosyl)imidazole-4-carboxamido]succinate + ADP + phosphate + 2 H(+). The protein operates within purine metabolism; IMP biosynthesis via de novo pathway; 5-amino-1-(5-phospho-D-ribosyl)imidazole-4-carboxamide from 5-amino-1-(5-phospho-D-ribosyl)imidazole-4-carboxylate: step 1/2. The chain is Phosphoribosylaminoimidazole-succinocarboxamide synthase from Streptococcus pyogenes serotype M1.